The chain runs to 477 residues: UDP-galactose-lipid carrier transferase (477 aa).

Helical transmembrane passes span 16–36, 52–72, 93–113, 115–135, 175–195, and 284–304; these read SLAL…IVLI, LDLK…WFWV, TILI…WELS, WIWI…RACV, VIAF…GVPV, and FDLV…VILI. Topologically, residues 305-477 are cytoplasmic; the sequence is FMVSRDGGAP…GVVLKRDGAY (173 aa).

Belongs to the bacterial sugar transferase family.

It localises to the cell membrane. It participates in glycan metabolism; exopolysaccharide biosynthesis. Its function is as follows. Involved in the biosynthesis of amylovoran which functions as a virulence factor. May act as a sugar transferase and may be involved in the export of the repeating unit by flipping the lipid carrier to the periplasmic face of the inner membrane. This chain is UDP-galactose-lipid carrier transferase (amsG), found in Erwinia amylovora (Fire blight bacteria).